The following is a 319-amino-acid chain: L-lactate dehydrogenase (319 aa).

Residues 10 to 11 (RV), D32, R37, Y62, and 76 to 77 (GV) contribute to the NAD(+) site. Residues Q79, R85, and 117–120 (NPVD) contribute to the substrate site. NAD(+) is bound by residues 115–117 (VTN) and S140. 145–148 (DTAR) serves as a coordination point for substrate. Beta-D-fructose 1,6-bisphosphate contacts are provided by R150 and H165. H172 functions as the Proton acceptor in the catalytic mechanism. Y217 carries the post-translational modification Phosphotyrosine. Substrate is bound at residue T226.

Belongs to the LDH/MDH superfamily. LDH family. Homotetramer.

Its subcellular location is the cytoplasm. The enzyme catalyses (S)-lactate + NAD(+) = pyruvate + NADH + H(+). The protein operates within fermentation; pyruvate fermentation to lactate; (S)-lactate from pyruvate: step 1/1. Allosterically activated by fructose 1,6-bisphosphate (FBP). Inactivated by Mn(2+), Co(2+), Cd(2+) and Zn(2+). Catalyzes the conversion of lactate to pyruvate. It is stereospecific for L(+)-lactate. The protein is L-lactate dehydrogenase of Thermotoga maritima (strain ATCC 43589 / DSM 3109 / JCM 10099 / NBRC 100826 / MSB8).